The primary structure comprises 1147 residues: MAISSSSCLGLICSLLCHWVGTASSLNLEDPNVCSHWESYSVTVQESYPHPFDQIYYTSCTDILNWFKCTRHRISYRTAYRHGEKTMYRRKSQCCPGFYESRDMCVPHCADKCVHGRCIAPNTCQCEPGWGGTNCSSACDGDHWGPHCSSRCQCKNRALCNPITGACHCAAGYRGWRCEDRCEQGTYGNDCHQRCQCQNGATCDHITGECRCSPGYTGAFCEDLCPPGKHGPHCEQRCPCQNGGVCHHVTGECSCPSGWMGTVCGQPCPEGRFGKNCSQECQCHNGGTCDAATGQCHCSPGYTGERCQDECPVGSYGVRCAEACRCVNGGKCYHVSGTCLCEAGFSGELCEARLCPEGLYGIKCDKRCPCHLDNTHSCHPMSGECGCKPGWSGLYCNETCSPGFYGEACQQICSCQNGADCDSVTGRCACAPGFKGTDCSTPCPLGRYGINCSSRCGCKNDAVCSPVDGSCICKAGWHGVDCSIRCPSGTWGFGCNLTCQCLNGGACNTLDGTCTCAPGWRGAKCEFPCQDGTYGLNCAERCDCSHADGCHPTTGHCRCLPGWSGVHCDSVCAEGRWGPNCSLPCYCKNGASCSPDDGICECAPGFRGTTCQRICSPGFYGHRCSQTCPQCVHSSGPCHHITGLCDCLPGFTGALCNEVCPSGRFGKNCAGVCTCTNNGTCNPIDRSCQCYPGWIGSDCSQPCPPAHWGPNCIHTCNCHNGAFCSAYDGECKCTPGWTGLYCTQRCPLGFYGKDCALICQCQNGADCDHISGQCTCRTGFMGRHCEQKCPAGTYGYGCRQICDCLNNSTCDHITGTCYCSPGWKGARCDQAGVIIVGNLNSLSRTSTALPADSYQIGAIAGIVVLVLVVLFLLALFIIYRHKQKRKESSMPAVTYTPAMRVINADYTIAETLPHSNGGNANSHYFTNPSYHTLSQCATSPHVNNRDRMTIAKSKNNQLFVNLKNVNPGKRGTLVDCTGTLPADWKQGGYLNELGAFGLDRSYMGKSLKDLGKNSEYNSSTCSLSSSENPYATIKDPPALLPKSSECGYVEMKSPARRDSPYAEINNSTPANRNVYEVEPTVSVVQGVFSNSGHVTQDPYDLPKNSHIPCHYDLLPVRDSSSSPKREDGGGSNSTSSNSTSSSSSSSE.

A signal peptide spans 1-25; the sequence is MAISSSSCLGLICSLLCHWVGTASS. The tract at residues 1–857 is necessary for interaction with AP2M1, self-assembly and formation of the irregular, mosaic-like adhesion pattern; that stretch reads MAISSSSCLG…ALPADSYQIG (857 aa). Over 26-857 the chain is Extracellular; sequence LNLEDPNVCS…ALPADSYQIG (832 aa). Positions 30-107 constitute an EMI domain; sequence DPNVCSHWES…FYESRDMCVP (78 aa). Intrachain disulfides connect cysteine 34–cysteine 95, cysteine 60–cysteine 69, cysteine 94–cysteine 105, cysteine 109–cysteine 124, cysteine 126–cysteine 135, cysteine 148–cysteine 160, cysteine 154–cysteine 167, cysteine 169–cysteine 178, cysteine 191–cysteine 203, cysteine 197–cysteine 210, cysteine 212–cysteine 221, cysteine 234–cysteine 246, cysteine 240–cysteine 253, cysteine 255–cysteine 264, cysteine 281–cysteine 289, cysteine 283–cysteine 296, cysteine 298–cysteine 307, cysteine 320–cysteine 332, cysteine 326–cysteine 339, cysteine 341–cysteine 350, cysteine 409–cysteine 421, cysteine 415–cysteine 428, cysteine 430–cysteine 439, cysteine 456–cysteine 464, cysteine 458–cysteine 471, cysteine 473–cysteine 482, cysteine 495–cysteine 507, cysteine 501–cysteine 514, cysteine 516–cysteine 525, cysteine 542–cysteine 550, cysteine 544–cysteine 557, cysteine 559–cysteine 568, cysteine 581–cysteine 593, cysteine 587–cysteine 600, cysteine 602–cysteine 611, cysteine 669–cysteine 681, cysteine 675–cysteine 688, cysteine 690–cysteine 699, cysteine 716–cysteine 724, cysteine 718–cysteine 731, cysteine 733–cysteine 742, cysteine 755–cysteine 767, cysteine 761–cysteine 774, cysteine 776–cysteine 785, cysteine 802–cysteine 810, cysteine 804–cysteine 817, and cysteine 819–cysteine 828. EGF-like domains follow at residues 101–136, 144–179, 187–222, 230–265, 278–308, 316–351, 405–440, 453–483, 491–526, 539–569, 577–612, 665–700, 713–743, 751–786, and 799–829; these read SRDMCVPHCADKCVHGRCIAPNTCQCEPGWGGTNCS, WGPHCSSRCQCKNRALCNPITGACHCAAGYRGWRCE, YGNDCHQRCQCQNGATCDHITGECRCSPGYTGAFCE, HGPHCEQRCPCQNGGVCHHVTGECSCPSGWMGTVCG, SQECQCHNGGTCDAATGQCHCSPGYTGERCQ, YGVRCAEACRCVNGGKCYHVSGTCLCEAGFSGELCE, YGEACQQICSCQNGADCDSVTGRCACAPGFKGTDCS, SSRCGCKNDAVCSPVDGSCICKAGWHGVDCS, WGFGCNLTCQCLNGGACNTLDGTCTCAPGWRGAKCE, AERCDCSHADGCHPTTGHCRCLPGWSGVHCD, WGPNCSLPCYCKNGASCSPDDGICECAPGFRGTTCQ, FGKNCAGVCTCTNNGTCNPIDRSCQCYPGWIGSDCS, IHTCNCHNGAFCSAYDGECKCTPGWTGLYCT, YGKDCALICQCQNGADCDHISGQCTCRTGFMGRHCE, and RQICDCLNNSTCDHITGTCYCSPGWKGARCD. An N-linked (GlcNAc...) asparagine glycan is attached at asparagine 134. Residue asparagine 496 is glycosylated (N-linked (GlcNAc...) asparagine). Residues 858–878 form a helical membrane-spanning segment; the sequence is AIAGIVVLVLVVLFLLALFII. The Cytoplasmic segment spans residues 879-1147; the sequence is YRHKQKRKES…STSSSSSSSE (269 aa). The interval 945 to 1147 is necessary for formation of large intracellular vacuoles; sequence RDRMTIAKSK…STSSSSSSSE (203 aa). Position 1030 is a phosphotyrosine (tyrosine 1030). The tract at residues 1093–1147 is disordered; the sequence is HVTQDPYDLPKNSHIPCHYDLLPVRDSSSSPKREDGGGSNSTSSNSTSSSSSSSE. The span at 1132 to 1147 shows a compositional bias: low complexity; the sequence is NSTSSNSTSSSSSSSE.

The protein belongs to the MEGF family. Homomer. Interacts with GULP1 and ABCA1. Interacts with AP2M1. Does not interact with MEGF11. Binds with high affinity to complement C1q. Interacts (via the cytoplasmic domain) with NOTCH1 (via NICD domain). Post-translationally, ubiquitinated; mono- and polyubiquitinated forms are detected. In terms of processing, phosphorylated on tyrosine residues. Phosphorylation at Tyr-1030 may be important for muscle cell proliferation. Expressed in cerebellum (at protein level). Expressed in kidney, stellate cells of the cerebellum and macrophage cell lines.

The protein resides in the cell membrane. Its subcellular location is the cell projection. It is found in the phagocytic cup. Its function is as follows. Membrane receptor involved in phagocytosis by macrophages and astrocytes of apoptotic cells. Receptor for C1q, an eat-me signal, that binds phosphatidylserine expressed on the surface of apoptotic cells. Cooperates with ABCA1 within the process of engulfment. Promotes the formation of large intracellular vacuoles and may be responsible for the uptake of amyloid-beta peptides. Necessary for astrocyte-dependent apoptotic neuron clearance in the developing cerebellum. Plays a role in muscle cell proliferation, adhesion and motility. Is also an essential factor in the regulation of myogenesis. Controls the balance between skeletal muscle satellite cells proliferation and differentiation through regulation of the notch signaling pathway. May also function in the mosaic spacing of specific neuron subtypes in the retina through homotypic retinal neuron repulsion. Mosaics provide a mechanism to distribute each cell type evenly across the retina, ensuring that all parts of the visual field have access to a full set of processing elements. The chain is Multiple epidermal growth factor-like domains protein 10 from Mus musculus (Mouse).